The chain runs to 96 residues: Co-chaperonin GroES (96 aa).

It belongs to the GroES chaperonin family. As to quaternary structure, heptamer of 7 subunits arranged in a ring. Interacts with the chaperonin GroEL.

The protein localises to the cytoplasm. In terms of biological role, together with the chaperonin GroEL, plays an essential role in assisting protein folding. The GroEL-GroES system forms a nano-cage that allows encapsulation of the non-native substrate proteins and provides a physical environment optimized to promote and accelerate protein folding. GroES binds to the apical surface of the GroEL ring, thereby capping the opening of the GroEL channel. The chain is Co-chaperonin GroES from Methylorubrum populi (strain ATCC BAA-705 / NCIMB 13946 / BJ001) (Methylobacterium populi).